Reading from the N-terminus, the 651-residue chain is Mitogen-activated protein kinase kinase kinase 2 (651 aa).

The Protein kinase domain occupies tryptophan 68–valine 330. Residues isoleucine 74–valine 82 and lysine 97 each bind ATP. Positions cysteine 105–histidine 130 form a coiled coil. Residues lysine 108 and lysine 110 each participate in a glycyl lysine isopeptide (Lys-Gly) (interchain with G-Cter in ubiquitin) cross-link. Residue aspartate 196 is the Proton acceptor of the active site. 3 disordered regions span residues glycine 460–glutamate 483, arginine 537–serine 601, and lysine 618–lysine 651. Residues threonine 464–tyrosine 477 are compositionally biased toward basic and acidic residues. The segment covering serine 570–alanine 599 has biased composition (polar residues). Residues arginine 605–methionine 628 adopt a coiled-coil conformation.

Belongs to the protein kinase superfamily. STE Ser/Thr protein kinase family. MAP kinase kinase kinase subfamily. As to expression, expressed in roots and flowers.

It localises to the cytoplasm. The protein localises to the cytoskeleton. The enzyme catalyses L-seryl-[protein] + ATP = O-phospho-L-seryl-[protein] + ADP + H(+). The catalysed reaction is L-threonyl-[protein] + ATP = O-phospho-L-threonyl-[protein] + ADP + H(+). Its function is as follows. Involved in cortical microtubules organization and stabilization by regulating the phosphorylation state of microtubule-associated proteins such as MAP65-1. This chain is Mitogen-activated protein kinase kinase kinase 2 (ANP2), found in Arabidopsis thaliana (Mouse-ear cress).